A 524-amino-acid chain; its full sequence is Putative cysteine ligase BshC (524 aa).

A coiled-coil region spans residues 437–457 (AQALDRSARKINYQIEKMERK).

It belongs to the BshC family.

This Solibacter usitatus (strain Ellin6076) protein is Putative cysteine ligase BshC.